Reading from the N-terminus, the 301-residue chain is MVDEVDANSTGDNSLVNMKGFSFKEVLGSDSARKSAFILLDSSNGENAILLADKNAFPVDKTSWSAILTGSTLKPIMKNDIYSSYTLCMPNEFSDVKSTLIYPCNEKHIAKYRDQKRFIINETPEDYRTITLPYIQRNQMSLEWVYNILDHKAEVDRIIYEETDPHDGFILAPDLKWSGEQLECLYVQALVRRKGIKSIRDLTANDLPLLEGIRDKGLNAIKEKYGLDKHQIRAYFHYQPSFYHLHVHFIHVSYEAPASGVAKAVLLDDVINNLKLIPDFYQRSTLTFTAKEQDPIYRREN.

Substrate is bound by residues glutamate 154, lysine 176, and 237-248 (HYQPSFYHLHVH). The Histidine triad motif signature appears at 244-248 (HLHVH). Catalysis depends on histidine 246, which acts as the Nucleophile.

This sequence belongs to the HIT family.

The protein localises to the nucleus. The enzyme catalyses a 5'-end (N(7)-methyl 5'-triphosphoguanosine)-ribonucleoside in mRNA + H2O = N(7)-methyl-GMP + a 5'-end diphospho-ribonucleoside in mRNA + 2 H(+). It catalyses the reaction a 5'-end (N(2),N(2),N(7)-trimethyl 5'-triphosphoguanosine)-ribonucleoside in mRNA + H2O = (N(2),N(2),N(7))-trimethyl-GMP + a 5'-end diphospho-ribonucleoside in mRNA + 2 H(+). Its activity is regulated as follows. The hydrolytic product 7-methylguanosine diphosphate (m7GDP) efficiently inhibits the decapping scavenger activity and acts as a competitive inhibitor in vitro. Functionally, decapping scavenger enzyme that catalyzes the cleavage of a residual cap structure following the degradation of mRNAs of the 3'-&gt;5' exosome-mediated mRNA decay pathway. Hydrolyzes cap analog structures like 7-methylguanosine nucleoside triphosphate (m7GpppG) and tri-methyl guanosine nucleoside triphosphate (m3(2,2,7)GpppG) with up to 2 nucleotide substrates (small capped oligoribonucleotides) and specifically releases 5'-phosphorylated RNA fragments and 7-methylguanosine monophosphate (m7GMP). Does not hydrolyze unmethylated cap analog (GpppG) and shows no decapping activity on intact m7GpppG-capped mRNA molecules. Does not hydrolyze 7-methylguanosine diphosphate (m7GDP) and tri-methylguanosine diphosphate (m3(2,2,7)GDP) to m(7)GMP and m3(2,2,7)GMP, respectively. May also play a role in the 5'-&gt;3 mRNA decay pathway; m7GDP, the downstream product released by the 5'-&gt;3' mRNA mediated decapping activity, may be also converted by dcs-1 to m7GMP. Binds to m7GpppG and strongly to m7GDP. The chain is m7GpppX diphosphatase from Ascaris suum (Pig roundworm).